The chain runs to 406 residues: Lymphocyte transmembrane adapter 1 (406 aa).

Positions 1–25 (MYTTPAPPEITRRSSEPSTQQGTLG) are disordered. Residues 1–33 (MYTTPAPPEITRRSSEPSTQQGTLGSLEGEKGH) lie on the Extracellular side of the membrane. A helical; Signal-anchor for type III membrane protein membrane pass occupies residues 34–54 (LLFPGFVVLVTIFLVVIVTCI). Topologically, residues 55 to 406 (LWSRKKQKKR…LATETSGEEV (352 aa)) are cytoplasmic. Residues 109 to 131 (ESLLSRASDSPEPEVPQASGSLQ) are disordered. Residue Tyr184 is modified to Phosphotyrosine. Positions 219-258 (AEGGHAGCGKATDRTGVWAPGLQGSNSLSEGDDSSQSSND) are disordered. The segment covering 242-258 (GSNSLSEGDDSSQSSND) has biased composition (low complexity). Phosphotyrosine is present on residues Tyr259, Tyr285, and Tyr352. The interval 358–406 (PELEGKDWKQGPGTWHPSDERTPSDQAGKFCEAVYPAGSLATETSGEEV) is disordered.

When phosphorylated, interacts with GRB2, PIK3R1 and GRAP2. Post-translationally, phosphorylated on tyrosines upon TCR or BCR activation; which leads to the recruitment of GRB2, PIK3R1 and GRAP2.

It is found in the cell membrane. Its function is as follows. Negatively regulates TCR (T-cell antigen receptor)-mediated signaling in T-cells and BCR (B-cell antigen receptor)-mediated signaling in B-cells. The protein is Lymphocyte transmembrane adapter 1 (Lax1) of Rattus norvegicus (Rat).